The primary structure comprises 105 residues: Thioredoxin (105 aa).

The Thioredoxin domain occupies 2–105 (VKQIDSKDAF…KLEATINEFV (104 aa)). Lys-3 is subject to N6-acetyllysine. Lys-8 carries the post-translational modification N6-succinyllysine. Residues Cys-32 and Cys-35 each act as nucleophile in the active site. Cysteines 32 and 35 form a disulfide. Residue Lys-39 is modified to N6-acetyllysine. Cys-62 and Cys-69 each carry S-nitrosocysteine. The residue at position 73 (Cys-73) is an S-nitrosocysteine; alternate. At Lys-94 the chain carries N6-acetyllysine; alternate. Lys-94 bears the N6-succinyllysine; alternate mark.

The protein belongs to the thioredoxin family. As to quaternary structure, homodimer; disulfide-linked. Interacts with TXNIP through the redox-active site. Interacts with MAP3K5 and CASP3. Interacts with APEX1; the interaction stimulates the FOS/JUN AP-1 DNA-binding activity in a redox-dependent manner. In the fully reduced protein, both Cys-69 and Cys-73 are nitrosylated in response to nitric oxide (NO). When two disulfide bonds are present in the protein, only Cys-73 is nitrosylated. Cys-73 can serve as donor for nitrosylation of target proteins.

The protein localises to the nucleus. It localises to the cytoplasm. Its subcellular location is the secreted. Functionally, participates in various redox reactions through the reversible oxidation of its active center dithiol to a disulfide and catalyzes dithiol-disulfide exchange reactions. Plays a role in the reversible S-nitrosylation of cysteine residues in target proteins, and thereby contributes to the response to intracellular nitric oxide. Nitrosylates the active site Cys of CASP3 in response to nitric oxide (NO), and thereby inhibits caspase-3 activity. Induces the FOS/JUN AP-1 DNA binding activity in ionizing radiation (IR) cells through its oxidation/reduction status and stimulates AP-1 transcriptional activity. In Callithrix jacchus (White-tufted-ear marmoset), this protein is Thioredoxin (TXN).